The following is a 410-amino-acid chain: Platelet-activating factor acetylhydrolase IB subunit alpha (410 aa).

The required for self-association and interaction with PAFAH1B2 and PAFAH1B3 stretch occupies residues 1–38 (MVLSQRQRDELNRAIADYLRSNGYEEAYSVFKKEAELD). The tract at residues 1–66 (MVLSQRQRDE…SVIRLQKKVM (66 aa)) is interaction with NDE1. The interval 1–102 (MVLSQRQRDE…EWIPRPPEKY (102 aa)) is interaction with NDEL1. The 33-residue stretch at 7-39 (QRDELNRAIADYLRSNGYEEAYSVFKKEAELDM) folds into the LisH domain. Lys53 is subject to N6-acetyllysine. Residues 56-82 (TSVIRLQKKVMELESKLNEAKEEFTSG) are a coiled coil. The interval 83 to 410 (GPLGQKRDPK…DQTVKVWECR (328 aa)) is interaction with dynein and dynactin. 7 WD repeats span residues 106–147 (GHRS…RTLK), 148–187 (GHTDSVQDISFDHSGKLLTSCSADMTIKLWDFQGFECIRT), 190–229 (GHDHNVSSVAIMPNGDHLVSASRDKTIKMWEVQTGYCVKT), 232–271 (GHREWVRMVRPNQDGTLIASCSNDQTVRVWVVATKECKAE), 274–333 (EHEH…CLMT), 336–377 (GHDN…KTLN), and 378–410 (AHEHFVTSLDFHKTAPYVVTGSVDQTVKVWECR). Ser109 is subject to Phosphoserine. The segment at 367–409 (YKNKRCMKTLNAHEHFVTSLDFHKTAPYVVTGSVDQTVKVWEC) is interaction with DCX. Positions 388–410 (FHKTAPYVVTGSVDQTVKVWECR) are interaction with NDEL1.

This sequence belongs to the WD repeat LIS1/nudF family. Can self-associate. Component of the cytosolic PAF-AH (I) heterotetrameric enzyme, which is composed of PAFAH1B1 (beta), PAFAH1B2 (alpha2) and PAFAH1B3 (alpha1) subunits. The catalytic activity of the enzyme resides in the alpha1 (PAFAH1B3) and alpha2 (PAFAH1B2) subunits, whereas the beta subunit (PAFAH1B1) has regulatory activity. Trimer formation is not essential for the catalytic activity. Interacts with the catalytic dimer of PAF-AH (I) heterotetrameric enzyme: interacts with PAFAH1B2 homodimer (alpha2/alpha2 homodimer), PAFAH1B3 homodimer (alpha1/alpha1 homodimer) and PAFAH1B2-PAFAH1B3 heterodimer (alpha2/alpha1 heterodimer). Interacts with DCX, dynein, dynactin, IQGAP1, KATNB1, NDE1, NDEL1, NUDC and RSN. Interacts with DISC1, and this interaction is enhanced by NDEL1. Interacts with DAB1 when DAB1 is phosphorylated in response to RELN/reelin signaling. Interacts with INTS13. Interacts with DCDC1.

The protein resides in the cytoplasm. The protein localises to the cytoskeleton. It is found in the microtubule organizing center. It localises to the centrosome. Its subcellular location is the spindle. The protein resides in the nucleus membrane. Regulatory subunit (beta subunit) of the cytosolic type I platelet-activating factor (PAF) acetylhydrolase (PAF-AH (I)), an enzyme that catalyzes the hydrolyze of the acetyl group at the sn-2 position of PAF and its analogs and participates in PAF inactivation. Regulates the PAF-AH (I) activity in a catalytic dimer composition-dependent manner. Positively regulates the activity of the minus-end directed microtubule motor protein dynein. May enhance dynein-mediated microtubule sliding by targeting dynein to the microtubule plus end. Required for several dynein- and microtubule-dependent processes such as the maintenance of Golgi integrity, the peripheral transport of microtubule fragments and the coupling of the nucleus and centrosome. Required during brain development for the proliferation of neuronal precursors and the migration of newly formed neurons from the ventricular/subventricular zone toward the cortical plate. Neuronal migration involves a process called nucleokinesis, whereby migrating cells extend an anterior process into which the nucleus subsequently translocates. During nucleokinesis dynein at the nuclear surface may translocate the nucleus towards the centrosome by exerting force on centrosomal microtubules. Also required for proper activation of Rho GTPases and actin polymerization at the leading edge of locomoting cerebellar neurons and postmigratory hippocampal neurons in response to calcium influx triggered via NMDA receptors. May also play a role in other forms of cell locomotion including the migration of fibroblasts during wound healing. Required for dynein recruitment to microtubule plus ends and BICD2-bound cargos. May modulate the Reelin pathway through interaction of the PAF-AH (I) catalytic dimer with VLDLR. The chain is Platelet-activating factor acetylhydrolase IB subunit alpha from Macaca fascicularis (Crab-eating macaque).